Here is a 76-residue protein sequence, read N- to C-terminus: MKAWVICLMVISIFMMIEPTLAAGGGKFLNPGVLDPCLRPNPPPECQAPGSAGKPRERVNEYKVGCSKLTRCDRVG.

Residues 1–22 form the signal peptide; the sequence is MKAWVICLMVISIFMMIEPTLA. Disulfide bonds link Cys-37/Cys-46 and Cys-66/Cys-72.

Belongs to the plant rapid alkalinization factor (RALF) family.

Its subcellular location is the secreted. In terms of biological role, cell signaling peptide that may regulate plant stress, growth, and development. Mediates a rapid alkalinization of extracellular space by mediating a transient increase in the cytoplasmic Ca(2+) concentration leading to a calcium-dependent signaling events through a cell surface receptor and a concomitant activation of some intracellular mitogen-activated protein kinases. The protein is Protein RALF-like 30 (RALFL30) of Arabidopsis thaliana (Mouse-ear cress).